A 313-amino-acid polypeptide reads, in one-letter code: Ribosomal RNA small subunit methyltransferase H (313 aa).

S-adenosyl-L-methionine contacts are provided by residues 35–37, D55, F79, D101, and Q108; that span reads GGH.

Belongs to the methyltransferase superfamily. RsmH family.

It localises to the cytoplasm. It catalyses the reaction cytidine(1402) in 16S rRNA + S-adenosyl-L-methionine = N(4)-methylcytidine(1402) in 16S rRNA + S-adenosyl-L-homocysteine + H(+). Specifically methylates the N4 position of cytidine in position 1402 (C1402) of 16S rRNA. The sequence is that of Ribosomal RNA small subunit methyltransferase H from Escherichia coli O7:K1 (strain IAI39 / ExPEC).